We begin with the raw amino-acid sequence, 130 residues long: Protein ApaG (130 aa).

The region spanning 3–127 (RAVTRQIEVT…FSLDSPDNKR (125 aa)) is the ApaG domain.

This chain is Protein ApaG, found in Bradyrhizobium diazoefficiens (strain JCM 10833 / BCRC 13528 / IAM 13628 / NBRC 14792 / USDA 110).